We begin with the raw amino-acid sequence, 806 residues long: Transitional endoplasmic reticulum ATPase (806 aa).

Position 2 is an N-acetylalanine (Ala-2). Ser-3 and Ser-7 each carry phosphoserine. Residue Lys-8 forms a Glycyl lysine isopeptide (Lys-Gly) (interchain with G-Cter in SUMO2) linkage. Ser-13 carries the phosphoserine modification. A Glycyl lysine isopeptide (Lys-Gly) (interchain with G-Cter in SUMO2) cross-link involves residue Lys-18. The residue at position 37 (Ser-37) is a Phosphoserine. Position 247-253 (247-253 (PGTGKTL)) interacts with ATP. Lys-315 carries the N6,N6,N6-trimethyllysine; by VCPKMT modification. Positions 348 and 384 each coordinate ATP. Phosphothreonine is present on Thr-436. Ser-462 bears the Phosphoserine mark. N6-acetyllysine is present on residues Lys-502 and Lys-505. 521-526 (GCGKTL) lines the ATP pocket. The residue at position 668 (Lys-668) is an N6-acetyllysine; alternate. Lys-668 carries the N6-succinyllysine; alternate modification. Residue Ser-702 is modified to Phosphoserine. The disordered stretch occupies residues 708–727 (RRERERQTNPSAMEVEEDDP). An N6-acetyllysine modification is found at Lys-754. Residues 768-806 (FGSFRFPSGNQGGAGPSQGSGGGTGGSVYTEDNDDDLYG) form a disordered region. A phosphoserine mark is found at Ser-770, Ser-775, and Ser-787. Residues 777–793 (NQGGAGPSQGSGGGTGG) show a composition bias toward gly residues. The tract at residues 797 to 806 (TEDNDDDLYG) is interaction with UBXN6. Tyr-805 carries the phosphotyrosine modification.

This sequence belongs to the AAA ATPase family. Homohexamer. Forms a ring-shaped particle of 12.5 nm diameter, that displays 6-fold radial symmetry. Part of a ternary complex containing STX5A, NSFL1C and VCP. NSFL1C forms a homotrimer that binds to one end of a VCP homohexamer. The complex binds to membranes enriched in phosphatidylethanolamine-containing lipids and promotes Golgi membrane fusion. Binds to a heterodimer of NPLOC4 and UFD1, binding to this heterodimer inhibits Golgi-membrane fusion. Interaction with VCIP135 leads to dissociation of the complex via ATP hydrolysis by VCP. Part of a ternary complex containing NPLOC4, UFD1 and VCP. Interacts with NSFL1C-like protein p37; the complex has membrane fusion activity and is required for Golgi and endoplasmic reticulum biogenesis. Interacts with SELENOS and SYVN1, as well as with DERL1 (via SHP-box motif), DERL2 and DERL3; which probably transfer misfolded proteins from the ER to VCP. Interacts with SVIP and DERL1. Component of a complex required to couple retrotranslocation, ubiquitination and deglycosylation composed of NGLY1, SAKS1, AMFR, VCP and RAD23B. Part of a complex composed of STUB1/CHIP, VCP/p97, CHRNA3, and UBXN2A that modulates the ubiquitination and endoplasmic reticulum-associated degradation (ERAD) of CHRNA3. Within the complex UBXN2A acts as a scaffold protein required for the interaction of CHRNA3 with VCP/p97, this interaction also inhibits CHRNA3 ubiquitination by STUB1/CHIP and subsequently ERAD. Interacts with UBXN2A (via UBX domain); the interaction is required for the interaction of CHRNA3 in the STUB1-VCP-UBXN2A complex. Directly interacts with UBXN4 and RNF19A. Interacts with CASR. Interacts with UBE4B and YOD1. Interacts with clathrin. Interacts with RNF103. Interacts with TRIM13 and TRIM21. Component of a VCP/p97-AMFR/gp78 complex that participates in the final step of the endoplasmic reticulum-associated degradation (ERAD) of HMGCR. Interacts directly with AMFR/gp78 (via its VIM). Interacts with RHBDD1 (via C-terminal domain). Interacts with SPRTN; leading to recruitment to stalled replication forks. Interacts with WASHC5. Interacts with UBOX5. Interacts (via N-terminus) with UBXN7, UBXN8, and probably several other UBX domain-containing proteins (via UBX domains); the interactions are mutually exclusive with VIM-dependent interactions such as those with AMFR and SELENOS. Forms a complex with UBQLN1 and UBXN4. Interacts (via the PIM motif) with RNF31 (via the PUB domain). Interacts with RIGI and RNF125; interaction takes place when RIGI is ubiquitinated via 'Lys-63'-linked ubiquitin on its CARD domains, leading to recruit RNF125 and promote ubiquitination and degradation of RIGI. Interacts with BAG6. Interacts with UBXN10. Interacts with UBXN6; the interaction with UBXN6 is direct and competitive with UFD1. Forms a ternary complex with CAV1 and UBXN6. Interacts with PLAA, UBXN6 and YOD1; may form a complex involved in macroautophagy. Interacts with ANKZF1. Interacts with ubiquitin-binding protein FAF1. Interacts with ZFAND2B (via VIM motif); the interaction is direct. Interacts with ZFAND1 (via its ubiquitin-like region); this interaction occurs in an arsenite-dependent manner. Interacts with CCDC47. Interacts with LMBR1L and UBAC2. Interacts with ATXN3. Interacts with TEX264; bridging VCP to covalent DNA-protein cross-links (DPCs). Requires Mg(2+) as cofactor. Post-translationally, ISGylated. In terms of processing, methylation at Lys-315 catalyzed by VCPKMT is increased in the presence of ASPSCR1. Lys-315 methylation may decrease ATPase activity. Phosphorylated by tyrosine kinases in response to T-cell antigen receptor activation. Phosphorylated in mitotic cells.

It is found in the cytoplasm. The protein localises to the cytosol. The protein resides in the endoplasmic reticulum. It localises to the nucleus. Its subcellular location is the stress granule. The catalysed reaction is ATP + H2O = ADP + phosphate + H(+). In terms of biological role, necessary for the fragmentation of Golgi stacks during mitosis and for their reassembly after mitosis. Involved in the formation of the transitional endoplasmic reticulum (tER). The transfer of membranes from the endoplasmic reticulum to the Golgi apparatus occurs via 50-70 nm transition vesicles which derive from part-rough, part-smooth transitional elements of the endoplasmic reticulum (tER). Vesicle budding from the tER is an ATP-dependent process. The ternary complex containing UFD1, VCP and NPLOC4 binds ubiquitinated proteins and is necessary for the export of misfolded proteins from the ER to the cytoplasm, where they are degraded by the proteasome. The NPLOC4-UFD1-VCP complex regulates spindle disassembly at the end of mitosis and is necessary for the formation of a closed nuclear envelope. Regulates E3 ubiquitin-protein ligase activity of RNF19A. Component of the VCP/p97-AMFR/gp78 complex that participates in the final step of the sterol-mediated ubiquitination and endoplasmic reticulum-associated degradation (ERAD) of HMGCR. Mediates the endoplasmic reticulum-associated degradation of CHRNA3 in cortical neurons as part of the STUB1-VCP-UBXN2A complex. Involved in endoplasmic reticulum stress-induced pre-emptive quality control, a mechanism that selectively attenuates the translocation of newly synthesized proteins into the endoplasmic reticulum and reroutes them to the cytosol for proteasomal degradation. Involved in clearance process by mediating G3BP1 extraction from stress granules. Also involved in DNA damage response: recruited to double-strand breaks (DSBs) sites in a RNF8- and RNF168-dependent manner and promotes the recruitment of TP53BP1 at DNA damage sites. Recruited to stalled replication forks by SPRTN: may act by mediating extraction of DNA polymerase eta (POLH) to prevent excessive translesion DNA synthesis and limit the incidence of mutations induced by DNA damage. Together with SPRTN metalloprotease, involved in the repair of covalent DNA-protein cross-links (DPCs) during DNA synthesis. Involved in interstrand cross-link repair in response to replication stress by mediating unloading of the ubiquitinated CMG helicase complex. Mediates extraction of PARP1 trapped to chromatin: recognizes and binds ubiquitinated PARP1 and promotes its removal. Required for cytoplasmic retrotranslocation of stressed/damaged mitochondrial outer-membrane proteins and their subsequent proteasomal degradation. Essential for the maturation of ubiquitin-containing autophagosomes and the clearance of ubiquitinated protein by autophagy. Acts as a negative regulator of type I interferon production by interacting with RIGI: interaction takes place when RIGI is ubiquitinated via 'Lys-63'-linked ubiquitin on its CARD domains, leading to recruit RNF125 and promote ubiquitination and degradation of RIGI. May play a role in the ubiquitin-dependent sorting of membrane proteins to lysosomes where they undergo degradation. May more particularly play a role in caveolins sorting in cells. By controlling the steady-state expression of the IGF1R receptor, indirectly regulates the insulin-like growth factor receptor signaling pathway. This is Transitional endoplasmic reticulum ATPase (VCP) from Sus scrofa (Pig).